Here is a 335-residue protein sequence, read N- to C-terminus: MDKMKIIMEKGTERLKRGFAKMVKGGVIMDVTNAEQARIAEEAGAVAVMALHKVPADIRKAGGVARMAPVEKIQEIMDAVTIPVMAKVRIGHEAEARILEALGVDMIDESEVLTPADPFFHIYKKKFTVPFVCGARNLGEAVRRIWEGAAMIRTKGEAGTGNIIEAVRHVRLVNENIRLIQRMTDEEIYGVAEKFAEPYLRLAFSVKEISGLPKRVLENEPIYEGFTYREIVDGLYKILLEIKKLGRLPVVNFAAGGVATPADAALMMAMGMDGVFVGSGIFKSSNPPAMARAIVEAVNHWDEPDVLAEISREIGEPMRGQDIAELEVRMEERGV.

D30 provides a ligand contact to D-ribose 5-phosphate. K87 acts as the Schiff-base intermediate with D-ribose 5-phosphate in catalysis. G159 provides a ligand contact to D-ribose 5-phosphate. D-glyceraldehyde 3-phosphate is bound at residue R171. Residues G257 and 278-279 (GS) each bind D-ribose 5-phosphate.

Belongs to the PdxS/SNZ family. In the presence of PdxT, forms a dodecamer of heterodimers.

The enzyme catalyses aldehydo-D-ribose 5-phosphate + D-glyceraldehyde 3-phosphate + L-glutamine = pyridoxal 5'-phosphate + L-glutamate + phosphate + 3 H2O + H(+). It functions in the pathway cofactor biosynthesis; pyridoxal 5'-phosphate biosynthesis. Catalyzes the formation of pyridoxal 5'-phosphate from ribose 5-phosphate (RBP), glyceraldehyde 3-phosphate (G3P) and ammonia. The ammonia is provided by the PdxT subunit. Can also use ribulose 5-phosphate and dihydroxyacetone phosphate as substrates, resulting from enzyme-catalyzed isomerization of RBP and G3P, respectively. The sequence is that of Pyridoxal 5'-phosphate synthase subunit PdxS from Pyrococcus furiosus (strain ATCC 43587 / DSM 3638 / JCM 8422 / Vc1).